The chain runs to 118 residues: Large ribosomal subunit protein uL18 (118 aa).

This sequence belongs to the universal ribosomal protein uL18 family. In terms of assembly, part of the 50S ribosomal subunit; part of the 5S rRNA/L5/L18/L25 subcomplex. Contacts the 5S and 23S rRNAs.

This is one of the proteins that bind and probably mediate the attachment of the 5S RNA into the large ribosomal subunit, where it forms part of the central protuberance. The polypeptide is Large ribosomal subunit protein uL18 (Nitratiruptor sp. (strain SB155-2)).